Here is a 540-residue protein sequence, read N- to C-terminus: Chaperonin GroEL (540 aa).

ATP is bound by residues 30–33 (TLGP), 87–91 (DGTTT), glycine 414, 479–481 (NAL), and aspartate 495.

The protein belongs to the chaperonin (HSP60) family. In terms of assembly, forms a cylinder of 14 subunits composed of two heptameric rings stacked back-to-back. Interacts with the co-chaperonin GroES.

The protein resides in the cytoplasm. It carries out the reaction ATP + H2O + a folded polypeptide = ADP + phosphate + an unfolded polypeptide.. Together with its co-chaperonin GroES, plays an essential role in assisting protein folding. The GroEL-GroES system forms a nano-cage that allows encapsulation of the non-native substrate proteins and provides a physical environment optimized to promote and accelerate protein folding. This chain is Chaperonin GroEL, found in Carboxydothermus hydrogenoformans (strain ATCC BAA-161 / DSM 6008 / Z-2901).